The sequence spans 167 residues: MASQSKTSVHDFTVKDAKGQDVDLSIYKGKLLLIVNVASQCGLTNSNYTELSQLYDKYKNQGLEILAFPCNQFGAQEPGDNEQIQEFACTRFKAEFPIFDKVDVNGDNAAPLYKHLKSSKGGLFGDSIKWNFSKFLVDKEGNVVERYAPTTSPLSIEKDIKKLLETA.

The active site involves C41.

The protein belongs to the glutathione peroxidase family.

It localises to the cytoplasm. The catalysed reaction is a hydroperoxy polyunsaturated fatty acid + 2 glutathione = a hydroxy polyunsaturated fatty acid + glutathione disulfide + H2O. Protects cells and enzymes from oxidative damage, by catalyzing the reduction of hydrogen peroxide, lipid peroxides and organic hydroperoxide, by glutathione. This is Probable phospholipid hydroperoxide glutathione peroxidase (CSA) from Citrus sinensis (Sweet orange).